Here is a 318-residue protein sequence, read N- to C-terminus: Pyrimidine-specific ribonucleoside hydrolase RihA (318 aa).

His240 is an active-site residue.

This sequence belongs to the IUNH family. RihA subfamily.

Functionally, hydrolyzes cytidine or uridine to ribose and cytosine or uracil, respectively. This Shewanella baltica (strain OS185) protein is Pyrimidine-specific ribonucleoside hydrolase RihA.